The sequence spans 688 residues: Glycine--tRNA ligase beta subunit (688 aa).

The protein belongs to the class-II aminoacyl-tRNA synthetase family. In terms of assembly, tetramer of two alpha and two beta subunits.

It is found in the cytoplasm. It carries out the reaction tRNA(Gly) + glycine + ATP = glycyl-tRNA(Gly) + AMP + diphosphate. This chain is Glycine--tRNA ligase beta subunit, found in Desulforudis audaxviator (strain MP104C).